Reading from the N-terminus, the 387-residue chain is Cytochrome b (387 aa).

A run of 4 helical transmembrane segments spans residues 32–52, 76–98, 113–133, and 179–199; these read FGSL…LLAC, FLLR…LHIG, TWNI…LGYC, and FFSL…MHLI. His-82 and His-96 together coordinate heme b. The heme b site is built by His-183 and His-197. His-202 serves as a coordination point for a ubiquinone. Transmembrane regions (helical) follow at residues 225 to 245, 289 to 309, 321 to 341, and 348 to 368; these read FLIK…YMVF, QLGV…PLLD, MGKF…WIGG, and FITI…ILIP.

It belongs to the cytochrome b family. In terms of assembly, fungal cytochrome b-c1 complex contains 10 subunits; 3 respiratory subunits, 2 core proteins and 5 low-molecular weight proteins. Cytochrome b-c1 complex is a homodimer. Requires heme b as cofactor.

It localises to the mitochondrion inner membrane. Functionally, component of the ubiquinol-cytochrome c reductase complex (complex III or cytochrome b-c1 complex) that is part of the mitochondrial respiratory chain. The b-c1 complex mediates electron transfer from ubiquinol to cytochrome c. Contributes to the generation of a proton gradient across the mitochondrial membrane that is then used for ATP synthesis. The chain is Cytochrome b (cob) from Schizosaccharomyces octosporus (Fission yeast).